A 117-amino-acid chain; its full sequence is Shadow of prion protein (117 aa).

Positions 1–24 (MRQRVACCWVLLLLAATFCQPAAA) are cleaved as a signal peptide. N-linked (GlcNAc...) asparagine glycosylation occurs at Asn-87. Residue Ala-104 is the site of GPI-anchor amidated alanine attachment. Residues 105–117 (MPWLCPLAAILHH) constitute a propeptide, removed in mature form.

This sequence belongs to the SPRN family.

The protein resides in the cell membrane. Prion-like protein that has PrP(C)-like neuroprotective activity. This Gallus gallus (Chicken) protein is Shadow of prion protein (SPRN).